The chain runs to 354 residues: Protein YGP1 (354 aa).

An N-terminal signal peptide occupies residues 1–19; that stretch reads MKFQVVLSALLACSSAVVA. The propeptide occupies 20-37; it reads SPIENLFKYRAVKASHSK. Residues N40, N50, N53, N58, N61, N65, N87, N94, N100, N106, N118, N172, N239, and N286 are each glycosylated (N-linked (GlcNAc...) asparagine). An Asparaginase/glutaminase domain is found at 50 to 354; sequence NSSNVTYANG…SKSALESIFP (305 aa).

The protein to yeast sporulation-specific protein SPS100. Extensively N-glycosylated.

It is found in the secreted. Functionally, may be involved in cellular adaptations prior to stationary phase. The sequence is that of Protein YGP1 (YGP1) from Saccharomyces cerevisiae (strain ATCC 204508 / S288c) (Baker's yeast).